A 509-amino-acid polypeptide reads, in one-letter code: MGLPWYRVHTVELNDPGRLLAVHMMHTALVAGWAGSMALYELAVFDPSDPVLDPMWRQGMFVIPFMTRLGITKSWGGWSITGGTITNPGIWSYEGVAGSHIVFSGLCFLAAIWHWVYWDLEIFCDDRTGKPSLDLPKIFGIHLFLSGVACFGFGAFHVTGLYGPGIWVSDPYGLTGKVQSVNPAWGVEGFDPFVPGGIASHHIAAGTLGILAGLFHLSVRPPQRLYKGLRMGNIETVLSSSSIAAVFFAAFVVAGTMWYGSATTPIELFGPTRYQWDQGYFQQEIYRRVGTGLAENQSLSEAWSKIPEKLAFYDYIGNNPAKGGLFRAGSMDNGDGIAIGWLGHPLIRDKEGRDVFVRRIPTFFETFRVVLDDDDGMVRADVPFRRAESKYSVEQVGVTVEFYGGELNGVSYSDPATVKKYARRAQLGEIFELDRATLKSDGVFRSSPRGWFTFGHASFALLFFFGHIWHGSRTLFRDVFAGIDPDLDAQVEFGAFQKLGDPTTRRQVV.

6 consecutive transmembrane segments (helical) span residues 21 to 36, 101 to 115, 140 to 156, 203 to 218, 237 to 253, and 458 to 473; these read AVHM…WAGS, IVFS…IWHW, GIHL…FGAF, IAAG…FHLS, VLSS…AFVV, and SFAL…HGSR.

This sequence belongs to the PsbB/PsbC family. PsbB subfamily. PSII is composed of 1 copy each of membrane proteins PsbA, PsbB, PsbC, PsbD, PsbE, PsbF, PsbH, PsbI, PsbJ, PsbK, PsbL, PsbM, PsbT, PsbX, PsbY, PsbZ, Psb30/Ycf12, at least 3 peripheral proteins of the oxygen-evolving complex and a large number of cofactors. It forms dimeric complexes. Binds multiple chlorophylls. PSII binds additional chlorophylls, carotenoids and specific lipids. serves as cofactor.

It localises to the plastid. It is found in the chloroplast thylakoid membrane. Its function is as follows. One of the components of the core complex of photosystem II (PSII). It binds chlorophyll and helps catalyze the primary light-induced photochemical processes of PSII. PSII is a light-driven water:plastoquinone oxidoreductase, using light energy to abstract electrons from H(2)O, generating O(2) and a proton gradient subsequently used for ATP formation. This chain is Photosystem II CP47 reaction center protein, found in Populus deltoides (Eastern poplar).